A 329-amino-acid polypeptide reads, in one-letter code: MVKTQRVVITPGEPAGIGPDLVVQLAQREWPVELVVCADATLLTDRAAMLGLPLTLRPYSPNSPAQPQTAGTLTLLPVALRESVTAGQLAIENGHYVVETLARACDGCLNGEFAALITGPVHKGVINDAGIPFTGHTEFFEERSQAKKVVMMLATEELRVALATTHLPLRDIADAITPALLHEVIAILHHDLRTKFGIAEPRILVCGLNPHAGEGGHMGTEEIDTIIPVLDELRAQGMILNGPLPADTLFQPKYLDNADAVLAMYHDQGLPVLKYQGFGRGVNITLGLPFIRTSVDHGTALELAGRGEADVGSFITALNLAIKMIVNTQ.

Substrate-binding residues include His136 and Thr137. Residues His166, His211, and His266 each coordinate a divalent metal cation. Positions 274, 283, and 292 each coordinate substrate.

It belongs to the PdxA family. Homodimer. Zn(2+) is required as a cofactor. Mg(2+) serves as cofactor. Requires Co(2+) as cofactor.

It is found in the cytoplasm. The catalysed reaction is 4-(phosphooxy)-L-threonine + NAD(+) = 3-amino-2-oxopropyl phosphate + CO2 + NADH. The protein operates within cofactor biosynthesis; pyridoxine 5'-phosphate biosynthesis; pyridoxine 5'-phosphate from D-erythrose 4-phosphate: step 4/5. Catalyzes the NAD(P)-dependent oxidation of 4-(phosphooxy)-L-threonine (HTP) into 2-amino-3-oxo-4-(phosphooxy)butyric acid which spontaneously decarboxylates to form 3-amino-2-oxopropyl phosphate (AHAP). The chain is 4-hydroxythreonine-4-phosphate dehydrogenase from Shigella boydii serotype 4 (strain Sb227).